The following is a 131-amino-acid chain: MAFTRSIALFAGLALAASSAQGATILGGYTQKNATSDDIELLTQATSSANMYNKNVDTRICLIAIENLETQTVAGTNYKFQVAGCPVETDDELGACDDRNCDYSSYNIVIFSQPWSDTIEVTSITPAEYQG.

A signal peptide spans 1-22 (MAFTRSIALFAGLALAASSAQG). A glycan (N-linked (GlcNAc...) asparagine) is linked at Asn33. Residues 71-75 (QTVAG) carry the Secondary area of contact motif.

The protein belongs to the cystatin family.

It localises to the secreted. Secreted effector that interacts with and inhibits host apoplastic pathogenesis-related papain-like cysteine proteases. Inhibition of host proteases by a pathogen extracellular protease inhibitor forms a specific type of defense-counterdefense mechanism between plants and microbial pathogens. The chain is Cystatin-like cysteine protease inhibitor EPIC3 from Phytophthora infestans (strain T30-4) (Potato late blight agent).